The chain runs to 362 residues: Flotillin-like protein FloA 2 (362 aa).

Residues 24–44 (TALLIGALVIFAGIVVVLFIF) traverse the membrane as a helical segment.

The protein belongs to the flotillin-like FloA family. Homooligomerizes.

The protein resides in the cell membrane. Its subcellular location is the membrane raft. Its function is as follows. Found in functional membrane microdomains (FMM) that may be equivalent to eukaryotic membrane rafts. FMMs are highly dynamic and increase in number as cells age. Flotillins are thought to be important factors in membrane fluidity. The chain is Flotillin-like protein FloA 2 from Rhodopirellula baltica (strain DSM 10527 / NCIMB 13988 / SH1).